A 472-amino-acid polypeptide reads, in one-letter code: Siroheme synthase 1 (472 aa).

Positions M1–L203 are precorrin-2 dehydrogenase /sirohydrochlorin ferrochelatase. Residues E22–V23 and Q43–T44 each bind NAD(+). Phosphoserine is present on S128. The segment at G215–A472 is uroporphyrinogen-III C-methyltransferase. P224 serves as a coordination point for S-adenosyl-L-methionine. D247 acts as the Proton acceptor in catalysis. Catalysis depends on K269, which acts as the Proton donor. S-adenosyl-L-methionine contacts are provided by residues G300–D302, I305, T330–A331, M382, and G411.

This sequence in the N-terminal section; belongs to the precorrin-2 dehydrogenase / sirohydrochlorin ferrochelatase family. In the C-terminal section; belongs to the precorrin methyltransferase family.

The catalysed reaction is uroporphyrinogen III + 2 S-adenosyl-L-methionine = precorrin-2 + 2 S-adenosyl-L-homocysteine + H(+). It catalyses the reaction precorrin-2 + NAD(+) = sirohydrochlorin + NADH + 2 H(+). It carries out the reaction siroheme + 2 H(+) = sirohydrochlorin + Fe(2+). Its pathway is cofactor biosynthesis; adenosylcobalamin biosynthesis; precorrin-2 from uroporphyrinogen III: step 1/1. It functions in the pathway cofactor biosynthesis; adenosylcobalamin biosynthesis; sirohydrochlorin from precorrin-2: step 1/1. The protein operates within porphyrin-containing compound metabolism; siroheme biosynthesis; precorrin-2 from uroporphyrinogen III: step 1/1. It participates in porphyrin-containing compound metabolism; siroheme biosynthesis; siroheme from sirohydrochlorin: step 1/1. Its pathway is porphyrin-containing compound metabolism; siroheme biosynthesis; sirohydrochlorin from precorrin-2: step 1/1. Functionally, multifunctional enzyme that catalyzes the SAM-dependent methylations of uroporphyrinogen III at position C-2 and C-7 to form precorrin-2 via precorrin-1. Then it catalyzes the NAD-dependent ring dehydrogenation of precorrin-2 to yield sirohydrochlorin. Finally, it catalyzes the ferrochelation of sirohydrochlorin to yield siroheme. The chain is Siroheme synthase 1 from Yersinia pestis bv. Antiqua (strain Nepal516).